The chain runs to 312 residues: Acetyl-coenzyme A carboxylase carboxyl transferase subunit alpha (312 aa).

A CoA carboxyltransferase C-terminal domain is found at 36-286; it reads RLDKEVKSIY…KEYFLDALRT (251 aa).

It belongs to the AccA family. In terms of assembly, acetyl-CoA carboxylase is a heterohexamer composed of biotin carboxyl carrier protein (AccB), biotin carboxylase (AccC) and two subunits each of ACCase subunit alpha (AccA) and ACCase subunit beta (AccD).

The protein localises to the cytoplasm. It carries out the reaction N(6)-carboxybiotinyl-L-lysyl-[protein] + acetyl-CoA = N(6)-biotinyl-L-lysyl-[protein] + malonyl-CoA. The protein operates within lipid metabolism; malonyl-CoA biosynthesis; malonyl-CoA from acetyl-CoA: step 1/1. Its function is as follows. Component of the acetyl coenzyme A carboxylase (ACC) complex. First, biotin carboxylase catalyzes the carboxylation of biotin on its carrier protein (BCCP) and then the CO(2) group is transferred by the carboxyltransferase to acetyl-CoA to form malonyl-CoA. The chain is Acetyl-coenzyme A carboxylase carboxyl transferase subunit alpha from Helicobacter pylori (strain G27).